The sequence spans 224 residues: Thymidylate kinase (224 aa).

Residue 7–14 participates in ATP binding; that stretch reads GIEGSGKS.

This sequence belongs to the thymidylate kinase family.

It catalyses the reaction dTMP + ATP = dTDP + ADP. Phosphorylation of dTMP to form dTDP in both de novo and salvage pathways of dTTP synthesis. This is Thymidylate kinase from Nitratidesulfovibrio vulgaris (strain DP4) (Desulfovibrio vulgaris).